A 725-amino-acid polypeptide reads, in one-letter code: Catalase-peroxidase (725 aa).

A cross-link (tryptophyl-tyrosyl-methioninium (Trp-Tyr) (with M-239)) is located at residues 90 to 213; sequence WHSAGTYRTG…LAAVQMGLIY (124 aa). H91 acts as the Proton acceptor in catalysis. The segment at residues 213-239 is a cross-link (tryptophyl-tyrosyl-methioninium (Tyr-Met) (with W-90)); the sequence is YVNPEGPNGNPDPVAAAKDIRETFARM. Residue H254 participates in heme b binding.

Belongs to the peroxidase family. Peroxidase/catalase subfamily. In terms of assembly, homodimer or homotetramer. Heme b serves as cofactor. Formation of the three residue Trp-Tyr-Met cross-link is important for the catalase, but not the peroxidase activity of the enzyme.

The enzyme catalyses H2O2 + AH2 = A + 2 H2O. It carries out the reaction 2 H2O2 = O2 + 2 H2O. In terms of biological role, bifunctional enzyme with both catalase and broad-spectrum peroxidase activity. This Hahella chejuensis (strain KCTC 2396) protein is Catalase-peroxidase.